The chain runs to 896 residues: Probable sodium/sulfate cotransporter 3 (896 aa).

The next 5 membrane-spanning stretches (helical) occupy residues Met-1–Ile-21, Ile-47–Tyr-69, Val-106–Leu-126, Leu-140–Ser-160, and Met-186–Leu-206. 4 consecutive RCK C-terminal domains span residues Leu-212 to Leu-296, Thr-319 to Asn-404, Leu-408 to Leu-493, and Glu-499 to Val-586. Helical transmembrane passes span Met-602 to Lys-622, Tyr-626 to Met-646, Ala-654 to Glu-674, Ala-685 to Val-705, Leu-734 to Ile-754, Phe-776 to Cys-796, and Val-804 to Leu-824. The segment at Arg-857–Pro-881 is disordered. Polar residues predominate over residues Val-868–Pro-881.

This sequence belongs to the divalent anion:Na+ symporter (DASS) superfamily. Na+/sulfate symporter (TC 2.A.47.4) family.

The protein resides in the cell membrane. In terms of biological role, na(+)/sulfate cotransporter with a probable low-affinity for sulfate. This chain is Probable sodium/sulfate cotransporter 3 (SLT3), found in Chlamydomonas reinhardtii (Chlamydomonas smithii).